A 176-amino-acid polypeptide reads, in one-letter code: Ribosome maturation factor RimM (176 aa).

The region spanning 102 to 175 (KNDYYWNDII…TDKKFILVQW (74 aa)) is the PRC barrel domain.

This sequence belongs to the RimM family. As to quaternary structure, binds ribosomal protein uS19.

The protein localises to the cytoplasm. Its function is as follows. An accessory protein needed during the final step in the assembly of 30S ribosomal subunit, possibly for assembly of the head region. Essential for efficient processing of 16S rRNA. May be needed both before and after RbfA during the maturation of 16S rRNA. It has affinity for free ribosomal 30S subunits but not for 70S ribosomes. The polypeptide is Ribosome maturation factor RimM (Buchnera aphidicola subsp. Acyrthosiphon pisum (strain APS) (Acyrthosiphon pisum symbiotic bacterium)).